A 905-amino-acid chain; its full sequence is Patched domain-containing protein 3 (905 aa).

Positions 1-67 (MISSKVAPGE…PVGQEAPPPR (67 aa)) are disordered. The helical transmembrane segment at 94–114 (WLFLLGPVLLTASLGTGLIFL) threads the bilayer. N-linked (GlcNAc...) asparagine glycans are attached at residues Asn146, Asn199, Asn229, and Asn233. 6 consecutive transmembrane segments (helical) span residues 337–357 (TVIP…VVSC), 369–389 (VAVF…GLML), 391–411 (IGVP…GVGV), 441–461 (VAVS…TGIT), 475–495 (GTTL…IMAL), and 558–578 (FIVV…CFQV). The SSD domain maps to 338 to 495 (VIPLFHLAYI…ITCFGAIMAL (158 aa)). 3 N-linked (GlcNAc...) asparagine glycosylation sites follow: Asn647, Asn661, and Asn692. Transmembrane regions (helical) follow at residues 759–779 (VMIA…HPVC), 781–801 (LWVT…MAFW), 813–833 (LVIC…AFVS), 849–869 (LLGY…CVLA), and 882–902 (IMFL…PVFL).

This sequence belongs to the patched family. As to expression, expressed in germ cells of the testis (at protein level).

The protein localises to the cell projection. The protein resides in the cilium. It is found in the flagellum membrane. It localises to the endoplasmic reticulum membrane. Its function is as follows. May play a role in sperm development or sperm function. However, does not appear to have an essential role in spermatogenesis or male fertility. In Rattus norvegicus (Rat), this protein is Patched domain-containing protein 3.